Consider the following 588-residue polypeptide: ustiloxin B cluster transcription factor ustR (588 aa).

Residues 11-38 (CWTCRLRRKKCNEDGQPCSNCEARGVFC) constitute a DNA-binding region (zn(2)-C6 fungal-type). The interval 68–92 (RTRRARATPTNSINGEPRRPSIDMN) is disordered.

It is found in the nucleus. Transcription factor that regulates the expression of the gene cluster that mediates the biosynthesis of ustiloxin B, an antimitotic tetrapeptide. This Aspergillus flavus (strain ATCC 200026 / FGSC A1120 / IAM 13836 / NRRL 3357 / JCM 12722 / SRRC 167) protein is ustiloxin B cluster transcription factor ustR.